Here is a 227-residue protein sequence, read N- to C-terminus: Cytochrome c oxidase subunit 2 (227 aa).

The Mitochondrial intermembrane segment spans residues 1-14; the sequence is MAYPFQLGLQDATS. Residues 15–45 traverse the membrane as a helical segment; that stretch reads PIMEELTNFHDHTLMIVFLISSLVLYIISLM. Residues 46 to 59 lie on the Mitochondrial matrix side of the membrane; that stretch reads LTTKLTHTSTMDAQ. The chain crosses the membrane as a helical span at residues 60–87; sequence EVETIWTILPAAILVLIALPSLRILYMM. At 88–227 the chain is on the mitochondrial intermembrane side; sequence DEINNPVLTV…YFESWSASMI (140 aa). The Cu cation site is built by histidine 161, cysteine 196, glutamate 198, cysteine 200, histidine 204, and methionine 207. Mg(2+) is bound at residue glutamate 198. The residue at position 218 (tyrosine 218) is a Phosphotyrosine.

This sequence belongs to the cytochrome c oxidase subunit 2 family. In terms of assembly, component of the cytochrome c oxidase (complex IV, CIV), a multisubunit enzyme composed of 14 subunits. The complex is composed of a catalytic core of 3 subunits MT-CO1, MT-CO2 and MT-CO3, encoded in the mitochondrial DNA, and 11 supernumerary subunits COX4I, COX5A, COX5B, COX6A, COX6B, COX6C, COX7A, COX7B, COX7C, COX8 and NDUFA4, which are encoded in the nuclear genome. The complex exists as a monomer or a dimer and forms supercomplexes (SCs) in the inner mitochondrial membrane with NADH-ubiquinone oxidoreductase (complex I, CI) and ubiquinol-cytochrome c oxidoreductase (cytochrome b-c1 complex, complex III, CIII), resulting in different assemblies (supercomplex SCI(1)III(2)IV(1) and megacomplex MCI(2)III(2)IV(2)). Found in a complex with TMEM177, COA6, COX18, COX20, SCO1 and SCO2. Interacts with TMEM177 in a COX20-dependent manner. Interacts with COX20. Interacts with COX16. The cofactor is Cu cation.

Its subcellular location is the mitochondrion inner membrane. The catalysed reaction is 4 Fe(II)-[cytochrome c] + O2 + 8 H(+)(in) = 4 Fe(III)-[cytochrome c] + 2 H2O + 4 H(+)(out). Its function is as follows. Component of the cytochrome c oxidase, the last enzyme in the mitochondrial electron transport chain which drives oxidative phosphorylation. The respiratory chain contains 3 multisubunit complexes succinate dehydrogenase (complex II, CII), ubiquinol-cytochrome c oxidoreductase (cytochrome b-c1 complex, complex III, CIII) and cytochrome c oxidase (complex IV, CIV), that cooperate to transfer electrons derived from NADH and succinate to molecular oxygen, creating an electrochemical gradient over the inner membrane that drives transmembrane transport and the ATP synthase. Cytochrome c oxidase is the component of the respiratory chain that catalyzes the reduction of oxygen to water. Electrons originating from reduced cytochrome c in the intermembrane space (IMS) are transferred via the dinuclear copper A center (CU(A)) of subunit 2 and heme A of subunit 1 to the active site in subunit 1, a binuclear center (BNC) formed by heme A3 and copper B (CU(B)). The BNC reduces molecular oxygen to 2 water molecules using 4 electrons from cytochrome c in the IMS and 4 protons from the mitochondrial matrix. This Conilurus penicillatus (Brush-tailed rabbit-rat) protein is Cytochrome c oxidase subunit 2 (MT-CO2).